Here is a 261-residue protein sequence, read N- to C-terminus: Thioesterase TesA (261 aa).

Active-site residues include S104, D208, and H236.

The protein belongs to the thioesterase family.

It catalyses the reaction a fatty acyl-CoA + H2O = a fatty acid + CoA + H(+). Its function is as follows. Involved in the synthesis of both phthiocerol dimycocerosates (PDIMs) and phenolic glycolipids (PGLs), which are structurally related lipids non-covalently bound to the outer cell wall layer of M.tuberculosis and are important virulence factors. The protein is Thioesterase TesA (tesA) of Mycobacterium leprae (strain TN).